Consider the following 675-residue polypeptide: Alpha-1,4-glucan:maltose-1-phosphate maltosyltransferase 1 (675 aa).

Residues Lys264, Gln324, and Asp359 each contribute to the alpha-maltose 1-phosphate site. The active-site Nucleophile is Asp394. Position 395 (Asn395) interacts with alpha-maltose 1-phosphate. Glu423 functions as the Proton donor in the catalytic mechanism. 534–535 serves as a coordination point for alpha-maltose 1-phosphate; it reads KY.

Belongs to the glycosyl hydrolase 13 family. GlgE subfamily. In terms of assembly, homodimer.

It carries out the reaction alpha-maltose 1-phosphate + [(1-&gt;4)-alpha-D-glucosyl](n) = [(1-&gt;4)-alpha-D-glucosyl](n+2) + phosphate. Is competitively inhibited by alpha-, beta- and gamma-cyclodextrins (cyclic maltooligosaccharides), unlike GlgE from M.tuberculosis. Functionally, maltosyltransferase that uses maltose 1-phosphate (M1P) as the sugar donor to elongate linear or branched alpha-(1-&gt;4)-glucans. Maltooligosaccharides with a degree of polymerization (DP) superior or equal to 4 are efficient acceptors, with DP6 being optimal in the GlgE-catalyzed polymerization with M1P. Is specific for the alpha-anomer of M1P as substrate, since the beta-anomer of M1P gives no activity. Alpha-D-glucose 1-phosphate cannot serve as a donor substrate, but alpha-maltosyl fluoride is an efficient donor in vitro. Exhibits an alpha-retaining catalytic mechanism, with evidence that maltooligosaccharide acceptors are extended at their non-reducing ends. Is also able to catalyze the reverse reaction in vitro, releasing M1P from glycogen or maltoheptaose in the presence of inorganic phosphate. Also catalyzes disproportionation reactions through maltosyl transfer between maltooligosaccharides. Is probably involved in a branched alpha-glucan biosynthetic pathway from trehalose, together with TreS, Mak and GlgB. This is Alpha-1,4-glucan:maltose-1-phosphate maltosyltransferase 1 (glgE1) from Streptomyces coelicolor (strain ATCC BAA-471 / A3(2) / M145).